Consider the following 310-residue polypeptide: Tagatose-6-phosphate kinase (310 aa).

Belongs to the carbohydrate kinase PfkB family. LacC subfamily.

It catalyses the reaction D-tagatofuranose 6-phosphate + ATP = D-tagatofuranose 1,6-bisphosphate + ADP + H(+). Its pathway is carbohydrate metabolism; D-tagatose 6-phosphate degradation; D-glyceraldehyde 3-phosphate and glycerone phosphate from D-tagatose 6-phosphate: step 1/2. The sequence is that of Tagatose-6-phosphate kinase from Lactococcus lactis subsp. lactis (Streptococcus lactis).